The primary structure comprises 149 residues: MAZZLTDEQIAEFKEAFSLFDKDGDGCITTKELGTVMRSLGQNPTEAELQDMINEVDADGNGTIDFPEFLNLMARKMKDTDSEEELKEAFRVFDKDQNGFISAAELRHVMTNLGEKLTDEEVDEMIREADVDGDGQINYEEFVKVMMAK.

Ala-2 carries the N-acetylalanine modification. EF-hand domains follow at residues 8-43 (EQIA…LGQN), 44-79 (PTEA…KMKD), 81-116 (DSEE…LGEK), and 117-149 (LTDE…MMAK). Ca(2+) contacts are provided by Asp-21, Asp-23, Asp-25, Cys-27, Glu-32, Asp-57, Asp-59, Asn-61, Thr-63, Glu-68, Asp-94, Asp-96, Asn-98, and Glu-105. An N6,N6,N6-trimethyllysine modification is found at Lys-116. Asp-130, Asp-132, Asp-134, Gln-136, and Glu-141 together coordinate Ca(2+).

Belongs to the calmodulin family. In terms of processing, the N-terminus is blocked.

Its function is as follows. Calmodulin mediates the control of a large number of enzymes, ion channels and other proteins by Ca(2+). Among the enzymes to be stimulated by the calmodulin-Ca(2+) complex are a number of protein kinases and phosphatases. This Spinacia oleracea (Spinach) protein is Calmodulin.